A 422-amino-acid polypeptide reads, in one-letter code: MGPVWLWLLIAELLLPVHYQPSSAHGDKSLGAPQPASHQSLEPAPAYHKVTPTITNFALRLYKQLAEEIPGNILFSPVSLSSTVALLSLGAHADTQAQILQSLGFNLTETPAADIHRGFQSLLHTLDLPSPKLELKLGHSLFLDRQLKPQQRFLDSAKELYGALAFSANFTEAAATGQQINDLVRKQTYGQVVGCLPEFDRDTLMVLLNYIFFKAKWKHPFDRYQTRKQESFFVDQRLQLRIPMMRQKEMHRFLYDQEASCTVLQIEYSGTALLLLVLPDPGKMQQVEAALQPETLRRWGQRFLPSLLDLHLPRFSVSATYNLEEILPLVGLSSLFDVEADLSGIMGQLNKTVSRVSHKAVVDMNEKGTEAAAASGLLSQPPSLNMTSAPHAHFNRPFLLLLWEVTTQSLLFLGKVVNPAAG.

Residues 1–24 form the signal peptide; that stretch reads MGPVWLWLLIAELLLPVHYQPSSA. The disordered stretch occupies residues 25–45; it reads HGDKSLGAPQPASHQSLEPAP. Asn-106, Asn-169, Asn-350, and Asn-385 each carry an N-linked (GlcNAc...) asparagine glycan.

Belongs to the serpin family.

The protein resides in the secreted. The polypeptide is Serpin A11 (Serpina11) (Rattus norvegicus (Rat)).